The following is a 166-amino-acid chain: Peptidyl-prolyl cis-trans isomerase-like 1 (166 aa).

In terms of domain architecture, PPIase cyclophilin-type spans 10–164; the sequence is QPPNVYLETS…DDVKILKAYP (155 aa). Residues 54 to 65, 70 to 71, 99 to 104, 109 to 113, T119, and K125 each bind cyclosporin A; these read HRIIKDFMIQGG, TG, AMANAG, and GSQFF. At S149 the chain carries Phosphoserine.

It belongs to the cyclophilin-type PPIase family. PPIL1 subfamily. As to quaternary structure, identified in the spliceosome C complex. Interacts with SNW1/SKIP. Interacts with CDC40/PRP17; this interaction leads to CDC40 isomerization. Interacts with RBM22.

Its subcellular location is the nucleus. The enzyme catalyses [protein]-peptidylproline (omega=180) = [protein]-peptidylproline (omega=0). Inhibited by Cyclosporin A. In terms of biological role, involved in pre-mRNA splicing as component of the spliceosome. PPIases accelerate the folding of proteins. It catalyzes the cis-trans isomerization of proline imidic peptide bonds in oligopeptides. Catalyzes prolyl peptide bond isomerization in CDC40/PRP17. Plays an important role in embryonic brain development; this function is independent of its isomerase activity. The chain is Peptidyl-prolyl cis-trans isomerase-like 1 (Ppil1) from Mus musculus (Mouse).